The following is a 408-amino-acid chain: Bone morphogenetic protein 4 (408 aa).

Positions 1–19 (MIPGNRMLMVVLLCQVLLG) are cleaved as a signal peptide. The propeptide occupies 20-292 (GATDASLIPE…HTLTRRRAKR (273 aa)). At serine 91 the chain carries Phosphoserine. The tract at residues 91-113 (SGEEEEEEQSQGTGLEYPERPAS) is disordered. Asparagine 144 and asparagine 209 each carry an N-linked (GlcNAc...) asparagine glycan. The tract at residues 281-307 (RGHTLTRRRAKRSPKHHPQRSRKKNKN) is disordered. The span at 284–307 (TLTRRRAKRSPKHHPQRSRKKNKN) shows a compositional bias: basic residues. Disulfide bonds link cysteine 308–cysteine 373, cysteine 337–cysteine 405, and cysteine 341–cysteine 407. Asparagine 350 and asparagine 365 each carry an N-linked (GlcNAc...) asparagine glycan.

This sequence belongs to the TGF-beta family. In terms of assembly, homodimer; disulfide-linked. Interacts with GREM2. Part of a complex consisting of TWSG1 and CHRD. Interacts with the serine proteases, HTRA1 and HTRA3; the interaction with either inhibits BMP4-mediated signaling. The HTRA protease activity is required for this inhibition. Interacts with SOSTDC1. Interacts with FBN1 (via N-terminal domain) and FBN2. Interacts with type I receptor BMPR1A. Interacts with type II receptor BMPR2. Interacts with FSTL1; this interaction inhibits the activation of the BMP4/Smad1/5/8 signaling pathway. Interacts with SCUBE3. Interacts with TGFBR3.

It is found in the secreted. The protein localises to the extracellular space. Its subcellular location is the extracellular matrix. In terms of biological role, growth factor of the TGF-beta superfamily that plays essential roles in many developmental processes, including neurogenesis, vascular development, angiogenesis and osteogenesis. Acts in concert with PTHLH/PTHRP to stimulate ductal outgrowth during embryonic mammary development and to inhibit hair follicle induction. Initiates the canonical BMP signaling cascade by associating with type I receptor BMPR1A and type II receptor BMPR2. Once all three components are bound together in a complex at the cell surface, BMPR2 phosphorylates and activates BMPR1A. In turn, BMPR1A propagates signal by phosphorylating SMAD1/5/8 that travel to the nucleus and act as activators and repressors of transcription of target genes. Positively regulates the expression of odontogenic development regulator MSX1 via inducing the IPO7-mediated import of SMAD1 to the nucleus. Required for MSX1-mediated mesenchymal molar tooth bud development beyond the bud stage, via promoting Wnt signaling. Acts as a positive regulator of odontoblast differentiation during mesenchymal tooth germ formation, expression is repressed during the bell stage by MSX1-mediated inhibition of CTNNB1 signaling. Able to induce its own expression in dental mesenchymal cells and also in the neighboring dental epithelial cells via an MSX1-mediated pathway. Can also signal through non-canonical BMP pathways such as ERK/MAP kinase, PI3K/Akt, or SRC cascades. For example, induces SRC phosphorylation which, in turn, activates VEGFR2, leading to an angiogenic response. In Rattus norvegicus (Rat), this protein is Bone morphogenetic protein 4.